The sequence spans 142 residues: Large-conductance mechanosensitive channel (142 aa).

2 consecutive transmembrane segments (helical) span residues 10–30 (FAIK…AAFS) and 86–106 (GNFI…FLMV).

This sequence belongs to the MscL family. Homopentamer.

It localises to the cell inner membrane. Its function is as follows. Channel that opens in response to stretch forces in the membrane lipid bilayer. May participate in the regulation of osmotic pressure changes within the cell. This is Large-conductance mechanosensitive channel from Polaromonas naphthalenivorans (strain CJ2).